The following is a 48-amino-acid chain: uncharacterized protein (48 aa).

Residues 25–47 (TFASIGVTVGVQIVILLIWGLSW) form a helical membrane-spanning segment.

The protein localises to the membrane. This is an uncharacterized protein from Archaeoglobus fulgidus (strain ATCC 49558 / DSM 4304 / JCM 9628 / NBRC 100126 / VC-16).